The following is an 831-amino-acid chain: Probable glucan 1,3-beta-glucosidase D (831 aa).

6 stretches are compositionally biased toward basic and acidic residues: residues 1–24, 44–56, 79–93, 102–115, 137–151, and 198–213; these read MPSH…YREV, RRDD…RSHE, RSHD…RSRA, SRRD…EYRR, RDGQ…DREA, and QRER…LESK. 2 disordered regions span residues 1 to 179 and 192 to 241; these read MPSH…SGSH and HYDE…GQSK. At 1–297 the chain is on the cytoplasmic side; the sequence is MPSHSRSRDR…AQPPFWKRKK (297 aa). Residues 298-318 form a helical; Signal-anchor for type II membrane protein membrane-spanning segment; that stretch reads WWIVIGVLVVVLAIVIPVAVV. Over 319–831 the chain is Extracellular; that stretch reads MSKKHGHDDD…PSFGDLPEYY (513 aa). N-linked (GlcNAc...) asparagine glycans are attached at residues asparagine 376, asparagine 381, asparagine 393, asparagine 410, asparagine 442, asparagine 546, and asparagine 558. Residue glutamate 597 is the Proton donor of the active site. N-linked (GlcNAc...) asparagine glycosylation is found at asparagine 610, asparagine 636, asparagine 669, and asparagine 689. Residue glutamate 702 is the Nucleophile of the active site.

Belongs to the glycosyl hydrolase 5 (cellulase A) family.

It is found in the cell membrane. The enzyme catalyses Successive hydrolysis of beta-D-glucose units from the non-reducing ends of (1-&gt;3)-beta-D-glucans, releasing alpha-glucose.. Functionally, glucosidase involved in the degradation of cellulosic biomass. Active on lichenan. This is Probable glucan 1,3-beta-glucosidase D (exgD) from Aspergillus flavus (strain ATCC 200026 / FGSC A1120 / IAM 13836 / NRRL 3357 / JCM 12722 / SRRC 167).